Here is a 369-residue protein sequence, read N- to C-terminus: Glutamate 5-kinase (369 aa).

Position 8 (Lys-8) interacts with ATP. Positions 49, 136, and 148 each coordinate substrate. Residues 168 to 169 (TD) and 211 to 217 (TGGMATK) each bind ATP. The region spanning 276-354 (TGKLYLDSGA…DEISQILGYG (79 aa)) is the PUA domain.

This sequence belongs to the glutamate 5-kinase family.

It is found in the cytoplasm. The enzyme catalyses L-glutamate + ATP = L-glutamyl 5-phosphate + ADP. The protein operates within amino-acid biosynthesis; L-proline biosynthesis; L-glutamate 5-semialdehyde from L-glutamate: step 1/2. In terms of biological role, catalyzes the transfer of a phosphate group to glutamate to form L-glutamate 5-phosphate. In Rippkaea orientalis (strain PCC 8801 / RF-1) (Cyanothece sp. (strain PCC 8801)), this protein is Glutamate 5-kinase.